We begin with the raw amino-acid sequence, 143 residues long: Photosystem II extrinsic protein U (143 aa).

The signal sequence occupies residues 1 to 29 (MKRLVGVLMILGLMLTSWGLLGSPQTAIA). Positions 30 to 44 (ASLSPLSFNPSPVLA) are excised as a propeptide.

The protein belongs to the PsbU family. As to quaternary structure, PSII is composed of 1 copy each of membrane proteins PsbA, PsbB, PsbC, PsbD, PsbE, PsbF, PsbH, PsbI, PsbJ, PsbK, PsbL, PsbM, PsbT, PsbX, PsbY, PsbZ, Psb30/Ycf12, peripheral proteins PsbO, CyanoQ (PsbQ), PsbU, PsbV and a large number of cofactors. It forms dimeric complexes.

The protein localises to the cellular thylakoid membrane. Functionally, one of the extrinsic, lumenal subunits of photosystem II (PSII). PSII is a light-driven water plastoquinone oxidoreductase, using light energy to abstract electrons from H(2)O, generating a proton gradient subsequently used for ATP formation. The extrinsic proteins stabilize the structure of photosystem II oxygen-evolving complex (OEC), the ion environment of oxygen evolution and protect the OEC against heat-induced inactivation. The sequence is that of Photosystem II extrinsic protein U from Leptolyngbya laminosa (Phormidium laminosum).